We begin with the raw amino-acid sequence, 133 residues long: UPF0225 protein BP2036 (133 aa).

The protein belongs to the UPF0225 family.

This is UPF0225 protein BP2036 from Bordetella pertussis (strain Tohama I / ATCC BAA-589 / NCTC 13251).